Here is a 60-residue protein sequence, read N- to C-terminus: Putative per-hexamer repeat protein 1 (60 aa).

The protein is Putative per-hexamer repeat protein 1 (Phxr1) of Mus musculus (Mouse).